Consider the following 255-residue polypeptide: 20 kDa chaperonin, chloroplastic (255 aa).

The N-terminal 53 residues, 1 to 53 (MAATHLTSTSSLTINTLPSFEGLRSASGISKINVSVAYPSFTSRSFRGLVVRA), are a transit peptide targeting the chloroplast. 2 cpn-10 domain regions span residues 54–156 (ASIT…ILET) and 157–255 (DDVK…AVLS).

It belongs to the GroES chaperonin family. As to quaternary structure, forms stable complexes with CPN60 in the presence of ATP.

The protein resides in the plastid. Its subcellular location is the chloroplast. Its function is as follows. Seems to function only as a co-chaperone, along with cpn60, and in certain cases is essential for the discharge of biologically active proteins from cpn60. The sequence is that of 20 kDa chaperonin, chloroplastic (CPN21) from Spinacia oleracea (Spinach).